A 429-amino-acid polypeptide reads, in one-letter code: UDP-N-acetylglucosamine 1-carboxyvinyltransferase (429 aa).

Lysine 22–asparagine 23 contributes to the phosphoenolpyruvate binding site. Arginine 102 is a binding site for UDP-N-acetyl-alpha-D-glucosamine. Catalysis depends on cysteine 126, which acts as the Proton donor. Cysteine 126 is subject to 2-(S-cysteinyl)pyruvic acid O-phosphothioketal. Residues lysine 171–valine 174, aspartate 316, and isoleucine 338 each bind UDP-N-acetyl-alpha-D-glucosamine.

The protein belongs to the EPSP synthase family. MurA subfamily.

It localises to the cytoplasm. It catalyses the reaction phosphoenolpyruvate + UDP-N-acetyl-alpha-D-glucosamine = UDP-N-acetyl-3-O-(1-carboxyvinyl)-alpha-D-glucosamine + phosphate. It functions in the pathway cell wall biogenesis; peptidoglycan biosynthesis. Its function is as follows. Cell wall formation. Adds enolpyruvyl to UDP-N-acetylglucosamine. This chain is UDP-N-acetylglucosamine 1-carboxyvinyltransferase, found in Azorhizobium caulinodans (strain ATCC 43989 / DSM 5975 / JCM 20966 / LMG 6465 / NBRC 14845 / NCIMB 13405 / ORS 571).